Reading from the N-terminus, the 606-residue chain is DNA mismatch repair protein MutL (606 aa).

The interval Gln348–Pro378 is disordered.

It belongs to the DNA mismatch repair MutL/HexB family.

Functionally, this protein is involved in the repair of mismatches in DNA. It is required for dam-dependent methyl-directed DNA mismatch repair. May act as a 'molecular matchmaker', a protein that promotes the formation of a stable complex between two or more DNA-binding proteins in an ATP-dependent manner without itself being part of a final effector complex. The chain is DNA mismatch repair protein MutL from Rhizobium etli (strain CIAT 652).